Consider the following 469-residue polypeptide: UDP-glycosyltransferase 43 (469 aa).

UDP-alpha-D-glucose contacts are provided by residues Ser280, 345–346 (WV), 363–371 (HCGWNSILE), and 385–388 (YSEQ).

It belongs to the UDP-glycosyltransferase family.

With respect to regulation, inhibited by Cu(2+) or Zn(2+). In terms of biological role, glycosyltransferase that catalyzes the C-glucosylation of daidzein to puerarin. Shows activity with the isoflavones daidzein and genistein, but has no activity towards flavonoids such as 2-hydroxynaringenin. Can use UDP-glucose, but not UDP-galactose or UDP-glucuronic acid as sugar donor. Does not require bivalent cations for activity. The sequence is that of UDP-glycosyltransferase 43 from Pueraria montana var. lobata (Kudzu vine).